Here is a 256-residue protein sequence, read N- to C-terminus: 5'-nucleotidase SurE (256 aa).

A divalent metal cation is bound by residues Asp8, Asp9, Ser40, and Asn92.

It belongs to the SurE nucleotidase family. The cofactor is a divalent metal cation.

It localises to the cytoplasm. It catalyses the reaction a ribonucleoside 5'-phosphate + H2O = a ribonucleoside + phosphate. In terms of biological role, nucleotidase that shows phosphatase activity on nucleoside 5'-monophosphates. This is 5'-nucleotidase SurE from Sinorhizobium fredii (strain NBRC 101917 / NGR234).